The sequence spans 228 residues: Glycosylphosphatidylinositol-anchored high density lipoprotein-binding protein 1 (228 aa).

The first 22 residues, 1 to 22 (MKALRAVLLILLLSGQPGSGWA), serve as a signal peptide directing secretion. The segment at 21 to 32 (WAQEDGDADPEP) is disordered. The tract at residues 24–48 (EDGDADPEPENYNYDDDDDEEEEEE) is important for LPL transport to the lumenal surface of endothelial cells. Over residues 24-49 (EDGDADPEPENYNYDDDDDEEEEEET) the composition is skewed to acidic residues. Y35 bears the Sulfotyrosine mark. The UPAR/Ly6 domain maps to 61–148 (LQCYFCQVLH…PWQNPQVQNP (88 aa)). Cystine bridges form between C63–C88, C66–C75, C81–C109, C113–C129, and C130–C135. N-linked (GlcNAc...) asparagine glycosylation is present at N76. Residues 102–108 (LTTYSMW) are important for interaction with LPL. Residues 145 to 200 (VQNPLGGRADSPLESGTRHPQGGKFSHPQVVKAAHPQSDGANLPKSGKANQPQGSG) form a disordered region. The GPI-anchor amidated glycine moiety is linked to residue G198. Residues 199 to 228 (SGAGYPSGWTKFGNIALLLSFFTCLWASGA) constitute a propeptide, removed in mature form.

In terms of assembly, mostly monomer, but also homodimer and homooligomer. Interacts with lipoprotein lipase (LPL). Interacts with high affinity with high-density lipoprotein (HDL). Interacts with chylomicrons. Interacts with APOA5. Glycosylation of Asn-76 is critical for cell surface localization. In terms of processing, sulfation of a Tyr in the N-terminal acidic region increases the affinity for LPL. In terms of tissue distribution, detected in fat tissue. Detected on the luminal surface of capillary endothelial cells in heart, skeletal muscle and brown adipose tissue (at protein level). Detected in heart and brown adipose tissue. Expressed at lower levels in lung and liver.

Its subcellular location is the apical cell membrane. It is found in the basolateral cell membrane. It localises to the cell membrane. Functionally, mediates the transport of lipoprotein lipase LPL from the basolateral to the apical surface of endothelial cells in capillaries. Anchors LPL on the surface of endothelial cells in the lumen of blood capillaries. Thereby, plays an important role in lipolytic processing of chylomicrons by LPL, triglyceride metabolism and lipid homeostasis. Binds chylomicrons and phospholipid particles that contain APOA5. Binds high-density lipoprotein (HDL) and plays a role in the uptake of lipids from HDL. The sequence is that of Glycosylphosphatidylinositol-anchored high density lipoprotein-binding protein 1 from Mus musculus (Mouse).